A 710-amino-acid chain; its full sequence is Ent-copalyl diphosphate synthase 1 (710 aa).

Residue Lys-145 coordinates substrate. The Mg(2+) site is built by Asp-277 and Asp-279. The DXDD motif motif lies at 277–280 (DIDD). Lys-364 contributes to the substrate binding site.

The protein belongs to the terpene synthase family. Tpsc subfamily. Mg(2+) serves as cofactor. In terms of tissue distribution, expressed in germinating seeds and leaves.

The catalysed reaction is (2E,6E,10E)-geranylgeranyl diphosphate = ent-copalyl diphosphate. It functions in the pathway plant hormone biosynthesis; gibberellin biosynthesis. Its pathway is secondary metabolite biosynthesis; terpenoid biosynthesis. Functionally, involved in the biosynthesis of ent-kaurene diterpenoids natural products such as oridonin, miltiradiene, eriocalyxin B and nezukol, known to exhibit antitumor, anti-inflammatory and antibacterial activities, and in the production of gibberellins phytohormones. Catalyzes the conversion of (2E,6E,10E)-geranylgeranyl diphosphate (GGPP) to ent-copalyl diphosphate (ent-CPP). The protein is Ent-copalyl diphosphate synthase 1 of Isodon eriocalyx (Plectranthus eriocalyx).